The sequence spans 371 residues: uncharacterized protein (371 aa).

The protein belongs to the serpin family.

This is an uncharacterized protein from Pyrobaculum aerophilum (strain ATCC 51768 / DSM 7523 / JCM 9630 / CIP 104966 / NBRC 100827 / IM2).